The sequence spans 492 residues: N-succinylglutamate 5-semialdehyde dehydrogenase (492 aa).

220-225 (GRANTG) contributes to the NAD(+) binding site. Active-site residues include E243 and C277.

Belongs to the aldehyde dehydrogenase family. AstD subfamily.

It carries out the reaction N-succinyl-L-glutamate 5-semialdehyde + NAD(+) + H2O = N-succinyl-L-glutamate + NADH + 2 H(+). Its pathway is amino-acid degradation; L-arginine degradation via AST pathway; L-glutamate and succinate from L-arginine: step 4/5. In terms of biological role, catalyzes the NAD-dependent reduction of succinylglutamate semialdehyde into succinylglutamate. The polypeptide is N-succinylglutamate 5-semialdehyde dehydrogenase (Shigella boydii serotype 18 (strain CDC 3083-94 / BS512)).